The chain runs to 47 residues: PhoP/PhoQ regulator MgrB (47 aa).

The chain crosses the membrane as a helical span at residues 6 to 26 (WVVLGIVVVVCLLLWAQVFNI).

This sequence belongs to the MgrB family. May form homooligomers. Probably interacts with the periplasmic domain of PhoQ.

It is found in the cell inner membrane. Its function is as follows. PhoP-regulated transcription is redox-sensitive, being activated when the periplasm becomes more reducing. MgrB acts between DsbA/DsbB and PhoP/PhoQ in this pathway. Represses PhoP/PhoQ signaling, possibly by binding to the periplasmic domain of PhoQ, altering its activity and that of downstream effector PhoP. This is PhoP/PhoQ regulator MgrB from Salmonella agona (strain SL483).